Reading from the N-terminus, the 438-residue chain is MEMVEPDAHLVALKVMRLMRPTLVGLGPVVTCEPTDLVQRFSSSQESDGMSGACAETLAAGQVLLLPQSFGSIYLGETFASYICVHNTTPNPVECVTVKADLQSNTSRINLSMHENAKSPVVLPPGGTIDDVIRYEVKEIGTHILVCEVNYSTPAGYAQSLRKFFKFQVLKPLDVKTKFYNAEIDEIYLEAQIQNVTTSPFCLEKVELDGSEDYSVTPLNTLPNGESVFTVKHMLQPNNSCQFLYCIKPKGDIAKNVDTLRQFNNVGKLDIVWRSNLGEKGRLQTSQLQRLPFECKTLRLEVLDAKNTIKIGTIFTFNCRVTNTSEHPMKLNVRLAAKFSPDSQYTGCADFMLNLLQSGESAEFPLSVCPSKLGLVKITPLVLTNTLQNEQFTIENVVDVFVVNSDYDNDTTTHQNKLIRYESAASCLTQKQVQLQVV.

It belongs to the TRAPPC13 family.

This Drosophila melanogaster (Fruit fly) protein is Probable trafficking protein particle complex subunit 13 homolog.